We begin with the raw amino-acid sequence, 379 residues long: Chaperone protein DnaJ (379 aa).

The J domain occupies aspartate 6–glycine 71. Residues glycine 138–threonine 220 form a CR-type zinc finger. Zn(2+)-binding residues include cysteine 151, cysteine 154, cysteine 168, cysteine 171, cysteine 194, cysteine 197, cysteine 208, and cysteine 211. CXXCXGXG motif repeat units follow at residues cysteine 151 to glycine 158, cysteine 168 to glycine 175, cysteine 194 to glycine 201, and cysteine 208 to glycine 215.

Belongs to the DnaJ family. As to quaternary structure, homodimer. Zn(2+) serves as cofactor.

The protein localises to the cytoplasm. Its function is as follows. Participates actively in the response to hyperosmotic and heat shock by preventing the aggregation of stress-denatured proteins and by disaggregating proteins, also in an autonomous, DnaK-independent fashion. Unfolded proteins bind initially to DnaJ; upon interaction with the DnaJ-bound protein, DnaK hydrolyzes its bound ATP, resulting in the formation of a stable complex. GrpE releases ADP from DnaK; ATP binding to DnaK triggers the release of the substrate protein, thus completing the reaction cycle. Several rounds of ATP-dependent interactions between DnaJ, DnaK and GrpE are required for fully efficient folding. Also involved, together with DnaK and GrpE, in the DNA replication of plasmids through activation of initiation proteins. In Ruminiclostridium cellulolyticum (strain ATCC 35319 / DSM 5812 / JCM 6584 / H10) (Clostridium cellulolyticum), this protein is Chaperone protein DnaJ.